A 2148-amino-acid polypeptide reads, in one-letter code: Polyketide synthase 1 (2148 aa).

The tract at residues 19–261 (FIFGDQSSCN…TPLAVHAPYH (243 aa)) is N-terminal acylcarrier protein transacylase domain (SAT). The 436-residue stretch at 394 to 829 (ESKIAIIGMS…GGNTALLVED (436 aa)) folds into the Ketosynthase family 3 (KS3) domain. Residues cysteine 566, histidine 701, and histidine 745 each act as for beta-ketoacyl synthase activity in the active site. The tract at residues 929-1233 (AFVFSGQGSQ…PSLMRNKDGW (305 aa)) is malonyl-CoA:ACP transacylase (MAT) domain. The For acyl/malonyl transferase activity role is filled by serine 1018. Positions 1310-1624 (TASVHRIVHE…RKVLNTAMPP (315 aa)) are product template (PT) domain. The segment at 1314–1447 (HRIVHESVEK…SSLHFEQPKV (134 aa)) is N-terminal hotdog fold. The 306-residue stretch at 1314-1619 (HRIVHESVEK…FQGIPRKVLN (306 aa)) folds into the PKS/mFAS DH domain. The Proton acceptor; for dehydratase activity role is filled by histidine 1346. The C-terminal hotdog fold stretch occupies residues 1474–1619 (LNSRMSSGVI…FQGIPRKVLN (146 aa)). The active-site Proton donor; for dehydratase activity is the aspartate 1533. The segment at 1619 to 1655 (NTAMPPPKSQNEAPVRSGPAKPAAKPPRSASSEHSGH) is disordered. The segment covering 1634-1650 (RSGPAKPAAKPPRSASS) has biased composition (low complexity). Residues 1678-1752 (RNPMLPVFKI…DLAAHLGLDT (75 aa)) enclose the Carrier 1 domain. Residue serine 1712 is modified to O-(pantetheine 4'-phosphoryl)serine. Composition is skewed to low complexity over residues 1757–1769 (QSSG…GGLS) and 1779–1796 (TSSV…SVSG). The tract at residues 1757–1796 (QSSGQSSSFGGLSPRSDSIGEITSSVTTPPSLSPRSSVSG) is disordered. One can recognise a Carrier 2 domain in the interval 1793–1870 (SVSGSQCKDV…SFKHMFQQGH (78 aa)). Serine 1830 is subject to O-(pantetheine 4'-phosphoryl)serine. The thioesterase (TE) domain stretch occupies residues 1882–2146 (LKQYRATSTL…ERVAAFIRST (265 aa)). The For thioesterase activity role is filled by serine 1973.

Polyketide synthase; part of the Pks1 gene cluster that mediates the biosynthesis of an anthraquinone derivative pigment that contributes to conidial pigmentation that provides protection from UV radiation, heat and cold stress. The polyketide synthase Pks1 produces 1-acetyl-2,4,6,8-tetrahydroxy-9,10-anthraquinone though condensation of acetyl-CoA with malonyl-CoA. The dehydratase EthD and the laccase Mlac1 further convert the anthraquinone derivative into the final conidial pigment. The protein is Polyketide synthase 1 of Metarhizium anisopliae (strain ARSEF 549).